We begin with the raw amino-acid sequence, 206 residues long: Proteasome subunit beta 1 (206 aa).

Residues 1 to 5 (MLMKG) constitute a propeptide, removed in mature form; by autocatalysis. The active-site Nucleophile is Thr-6.

The protein belongs to the peptidase T1B family. The 20S proteasome core is composed of 14 alpha and 14 beta subunits that assemble into four stacked heptameric rings, resulting in a barrel-shaped structure. The two inner rings, each composed of seven catalytic beta subunits, are sandwiched by two outer rings, each composed of seven alpha subunits. The catalytic chamber with the active sites is on the inside of the barrel. Has a gated structure, the ends of the cylinder being occluded by the N-termini of the alpha-subunits. Is capped at one or both ends by the proteasome regulatory ATPase, PAN.

It localises to the cytoplasm. The catalysed reaction is Cleavage of peptide bonds with very broad specificity.. Its activity is regulated as follows. The formation of the proteasomal ATPase PAN-20S proteasome complex, via the docking of the C-termini of PAN into the intersubunit pockets in the alpha-rings, triggers opening of the gate for substrate entry. Interconversion between the open-gate and close-gate conformations leads to a dynamic regulation of the 20S proteasome proteolysis activity. Its function is as follows. Component of the proteasome core, a large protease complex with broad specificity involved in protein degradation. In Korarchaeum cryptofilum (strain OPF8), this protein is Proteasome subunit beta 1.